A 1429-amino-acid polypeptide reads, in one-letter code: Dicer-like protein 2 (1429 aa).

The region spanning 21–200 (MFEASLKGNI…TIEMNLNSVC (180 aa)) is the Helicase ATP-binding domain. 34–41 (MGTGSGKT) is a binding site for ATP. Residues 141 to 144 (DEAH) carry the DEAH box motif. Residues 335–501 (ALISFLMSTE…EDRRRTEELR (167 aa)) form the Helicase C-terminal domain. The region spanning 528–622 (AMQHLVHFCD…LPLTKSREFT (95 aa)) is the Dicer dsRNA-binding fold domain. RNase III domains follow at residues 874 to 1014 (ATRL…IDGG) and 1056 to 1250 (QENL…VDSG). Mg(2+) contacts are provided by Glu-1095, Asp-1236, and Glu-1239.

Belongs to the helicase family. Dicer subfamily. Mg(2+) is required as a cofactor. Requires Mn(2+) as cofactor.

Functionally, dicer-like endonuclease involved in cleaving double-stranded RNA in the RNA interference (RNAi) pathway. Produces 21 to 25 bp dsRNAs (siRNAs) which target the selective destruction of homologous RNAs leading to sequence-specific suppression of gene expression, called post-transcriptional gene silencing (PTGS). Part of a broad host defense response against viral infection and transposons. This chain is Dicer-like protein 2 (dcl2), found in Emericella nidulans (strain FGSC A4 / ATCC 38163 / CBS 112.46 / NRRL 194 / M139) (Aspergillus nidulans).